A 114-amino-acid polypeptide reads, in one-letter code: BolA-like protein DDB_G0274169 (114 aa).

Polar residues predominate over residues 88 to 98 (TQWKKNNQTKI). The segment at 88–114 (TQWKKNNQTKINVDDDKSPSCKGGFGK) is disordered.

Belongs to the BolA/IbaG family.

This is BolA-like protein DDB_G0274169 from Dictyostelium discoideum (Social amoeba).